The sequence spans 294 residues: Aquaporin NIP1-2 (294 aa).

Met1 bears the N-acetylmethionine mark. The next 2 membrane-spanning stretches (helical) occupy residues 54-74 (LMAE…AVAV) and 82-102 (VTLP…VYSL). An NPA 1 motif is present at residues 111-113 (NPA). 3 consecutive transmembrane segments (helical) span residues 133–153 (VISQ…LFGL), 177–197 (SFVI…GVAT), and 201–221 (AIGE…VIIA). The NPA 2 signature appears at 230–232 (NPG). A helical membrane pass occupies residues 248-268 (WIYIVSPIVGAVSGAWVYNMV). Ser283 is modified (phosphoserine).

It belongs to the MIP/aquaporin (TC 1.A.8) family. NIP (TC 1.A.8.12) subfamily. Expressed in developing seeds.

It localises to the membrane. Functionally, water channel probably required to promote glycerol permeability and water transport across cell membranes. This is Aquaporin NIP1-2 (NIP1-2) from Arabidopsis thaliana (Mouse-ear cress).